Here is a 218-residue protein sequence, read N- to C-terminus: Probable transaldolase (218 aa).

Lys-87 serves as the catalytic Schiff-base intermediate with substrate.

This sequence belongs to the transaldolase family. Type 3B subfamily.

It localises to the cytoplasm. The enzyme catalyses D-sedoheptulose 7-phosphate + D-glyceraldehyde 3-phosphate = D-erythrose 4-phosphate + beta-D-fructose 6-phosphate. The protein operates within carbohydrate degradation; pentose phosphate pathway; D-glyceraldehyde 3-phosphate and beta-D-fructose 6-phosphate from D-ribose 5-phosphate and D-xylulose 5-phosphate (non-oxidative stage): step 2/3. Functionally, transaldolase is important for the balance of metabolites in the pentose-phosphate pathway. The sequence is that of Probable transaldolase from Parabacteroides distasonis (strain ATCC 8503 / DSM 20701 / CIP 104284 / JCM 5825 / NCTC 11152).